The following is a 449-amino-acid chain: Probable glycosyltransferase 5 (449 aa).

Residues 1-14 (MMEKHGGKVTSDRR) show a composition bias toward basic and acidic residues. The disordered stretch occupies residues 1–24 (MMEKHGGKVTSDRRAGRRQHGQRC). Over 1–28 (MMEKHGGKVTSDRRAGRRQHGQRCSASD) the chain is Cytoplasmic. A helical; Signal-anchor for type II membrane protein transmembrane segment spans residues 29–49 (AAPLVVVVILIVGALFLILGP). The Lumenal portion of the chain corresponds to 50–449 (TGSSSFTVPR…HPTFRAARPT (400 aa)). The disordered stretch occupies residues 74–109 (APPPPPPPAQMQAGANASSEEDSGLPPPRQLTDPPY). N-linked (GlcNAc...) asparagine glycosylation is found at N89, N413, and N422.

Belongs to the glycosyltransferase 34 family.

The protein localises to the golgi apparatus membrane. Probable glycosyltransferase that may be involved in the biosynthesis of xyloglucan. The sequence is that of Probable glycosyltransferase 5 from Oryza sativa subsp. indica (Rice).